Reading from the N-terminus, the 644-residue chain is Threonine--tRNA ligase (644 aa).

One can recognise a TGS domain in the interval 3–64; it reads EMIRITFPDG…QEDGSISIIT (62 aa). The interval 245-542 is catalytic; the sequence is DHRKLGKELE…LIEEYKGAFP (298 aa). Zn(2+)-binding residues include Cys-338, His-389, and His-519.

This sequence belongs to the class-II aminoacyl-tRNA synthetase family. In terms of assembly, homodimer. Zn(2+) is required as a cofactor.

It localises to the cytoplasm. The catalysed reaction is tRNA(Thr) + L-threonine + ATP = L-threonyl-tRNA(Thr) + AMP + diphosphate + H(+). Catalyzes the attachment of threonine to tRNA(Thr) in a two-step reaction: L-threonine is first activated by ATP to form Thr-AMP and then transferred to the acceptor end of tRNA(Thr). Also edits incorrectly charged L-seryl-tRNA(Thr). The chain is Threonine--tRNA ligase from Geobacillus sp. (strain WCH70).